The chain runs to 88 residues: U2-ctenitoxin-Pn1a (88 aa).

The signal sequence occupies residues 1–17 (MKVAILILSILVLAVAS). Residues 18 to 34 (ETIEEYRDDFAVEELER) constitute a propeptide that is removed on maturation. Disulfide bonds link C37-C51, C44-C57, C48-C86, C50-C71, and C59-C69. A propeptide is located at residue K88.

As to expression, expressed by the venom gland.

The protein localises to the secreted. Inhibits voltage-gated sodium channels (Nav). Causes scratching, lacrimation, hypersalivation, sweating and agitation followed by spastic paralysis of the anterior and posterior extremities and death at dose levels of 1.62 mg/mouse. Insecticidal to the larval and adult forms of the house fly. The sequence is that of U2-ctenitoxin-Pn1a from Phoneutria nigriventer (Brazilian armed spider).